A 311-amino-acid chain; its full sequence is Arginine/serine-rich protein 1 (311 aa).

Positions 1 to 125 (MSTYVNDMWP…RSRSRSRGRS (125 aa)) are disordered. Ser-12 is subject to Phosphoserine. The segment covering 20 to 31 (STSRSGGSSRLS) has biased composition (low complexity). The span at 32 to 123 (SRSRSRSFSR…RSRSRSRSRG (92 aa)) shows a compositional bias: basic residues. Residues Ser-109 and Ser-111 each carry the phosphoserine modification. Arg-135 is subject to Omega-N-methylarginine.

The protein belongs to the RSRP family. In terms of processing, phosphorylated. Phosphorylation at Ser-109 and Ser-111 mediates the interaction with spliceosome proteins.

It localises to the nucleus. Functionally, probably acts as a spliceosomal factor that contributes to spliceosome assembly and regulates the isoform switching of proteins such as PARP6. The polypeptide is Arginine/serine-rich protein 1 (RSRP1) (Pongo abelii (Sumatran orangutan)).